A 910-amino-acid polypeptide reads, in one-letter code: Adhesion G-protein coupled receptor F1 (910 aa).

The N-terminal stretch at 1 to 19 is a signal peptide; the sequence is MKVGVLWLISFFTFTDGHG. Over 20 to 583 the chain is Extracellular; it reads GFLGKNDGIK…SPFVPSTIFP (564 aa). 17 N-linked (GlcNAc...) asparagine glycosylation sites follow: Asn139, Asn168, Asn205, Asn282, Asn310, Asn317, Asn329, Asn354, Asn368, Asn389, Asn410, Asn423, Asn437, Asn455, Asn512, Asn528, and Asn553. Residues 148 to 256 enclose the SEA domain; that stretch reads ERTKIWGTFK…GSFRVFGKAQ (109 aa). Cystine bridges form between Cys257–Cys287 and Cys275–Cys299. The 143-residue stretch at 437-579 folds into the GAIN-B domain; the sequence is NKSQLKRGYS…SILMSPFVPS (143 aa). 2 cysteine pairs are disulfide-bonded: Cys534/Cys561 and Cys549/Cys563. A GPS region spans residues 534–579; sequence CVFWDFSHLQWNDAGCHLVNETQDIVTCQCTHLTSFSILMSPFVPS. The segment at 568–576 is stachel; sequence SFSILMSPF. The helical transmembrane segment at 584 to 609 threads the bilayer; that stretch reads VVKWITYVGLGISIGSLILCLIIEAL. Residues 610-621 are Cytoplasmic-facing; that stretch reads FWKQIKKSQTSH. The helical transmembrane segment at 622-646 threads the bilayer; that stretch reads TRRICMVNIALSLLIADVWFIVGAT. At 647–658 the chain is on the extracellular side; that stretch reads VDTTVNPSGVCT. Cysteines 657 and 733 form a disulfide. The chain crosses the membrane as a helical span at residues 659–684; that stretch reads AAVFFTHFFYLSLFFWMLMLGILLAY. Topologically, residues 685-696 are cytoplasmic; the sequence is RIILVFHHMAQH. Residues 697–719 traverse the membrane as a helical segment; that stretch reads LMMAVGFCLGYGCPLIISVITIA. The Extracellular segment spans residues 720-742; sequence VTQPSNTYKRKDVCWLNWSNGSK. N-linked (GlcNAc...) asparagine glycosylation is found at Asn736 and Asn739. Residues 743–767 form a helical membrane-spanning segment; the sequence is PLLAFVVPALAIVAVNFVVVLLVLT. Residues 768-784 are Cytoplasmic-facing; the sequence is KLWRPTVGERLSRDDKA. A helical transmembrane segment spans residues 785–813; that stretch reads TIIRVGKSLLILTPLLGLTWGFGIGTIVD. Residues 814–816 lie on the Extracellular side of the membrane; that stretch reads SQN. Residues 817-842 form a helical membrane-spanning segment; it reads LAWHVIFALLNAFQGFFILCFGILLD. Residues 843–910 are Cytoplasmic-facing; the sequence is SKLRQLLFNK…IMLTQFVSNE (68 aa).

It belongs to the G-protein coupled receptor 2 family. Adhesion G-protein coupled receptor (ADGR) subfamily. Heterodimer of 2 chains generated by proteolytic processing; the large extracellular N-terminal fragment and the membrane-bound C-terminal fragment predominantly remain associated and non-covalently linked. Autoproteolytically processed at the GPS region of the GAIN-B domain; this cleavage modulates receptor activity. Post-translationally, glycosylated. Glycosylation at Asn-389 is required for secretion or folding. Mainly expressed in the kidney. Up-regulated in lung adenocarcinomas and prostate cancers.

Its subcellular location is the cell membrane. The protein localises to the secreted. With respect to regulation, forms a heterodimer of 2 chains generated by proteolytic processing that remain associated through non-covalent interactions mediated by the GAIN-B domain. In the inactivated receptor, the Stachel sequence (also named stalk) is embedded in the GAIN-B domain, where it adopts a beta-strand conformation. On activation, the Stachel moves into the 7 transmembrane region and adopts a twisted hook-shaped configuration that forms contacts within the receptor, leading to coupling of a G-alpha protein, which activates signaling. The cleaved GAIN-B and N-terminal domains can then dissociate from the rest of the receptor. Its function is as follows. Adhesion G-protein coupled receptor (aGPCR) for N-docosahexaenoylethanolamine (synaptamide), an omega-3 fatty acid lipid highly enriched in the brain. Ligand binding causes a conformation change that triggers signaling via guanine nucleotide-binding proteins (G proteins) and modulates the activity of downstream effectors, such as adenylate cyclase. ADGRF1 is coupled to G(s) G proteins and mediates activation of adenylate cyclase activity. Also able to couple to G(q), G(i) and G(12)/G(13) G proteins; additional evidence is however required to confirm this result in vivo. Involved in the development of neurons and cognitive function. In liver, involved in fat accumulation. The protein is Adhesion G-protein coupled receptor F1 of Homo sapiens (Human).